A 209-amino-acid polypeptide reads, in one-letter code: uncharacterized protein (209 aa).

3 helical membrane passes run 10 to 32 (AVVI…YLAF), 37 to 59 (LRYV…TGLI), and 64 to 86 (FIYF…ILYV).

The protein resides in the cell membrane. This is an uncharacterized protein from Aquifex aeolicus (strain VF5).